Reading from the N-terminus, the 99-residue chain is Transcriptional repressor PagR (99 aa).

One can recognise an HTH arsR-type domain in the interval 9–99 (IEYMSLEDDA…GIIKLLNPIQ (91 aa)). The segment at residues 43–62 (NVTQIIQILKLPQSTVSQHL) is a DNA-binding region (H-T-H motif).

In terms of biological role, represses the expression of the pagA and atxA genes. The protein is Transcriptional repressor PagR (pagR) of Bacillus anthracis.